We begin with the raw amino-acid sequence, 211 residues long: Protein-L-isoaspartate O-methyltransferase (211 aa).

Ser-62 is a catalytic residue.

The protein belongs to the methyltransferase superfamily. L-isoaspartyl/D-aspartyl protein methyltransferase family.

It localises to the cytoplasm. It catalyses the reaction [protein]-L-isoaspartate + S-adenosyl-L-methionine = [protein]-L-isoaspartate alpha-methyl ester + S-adenosyl-L-homocysteine. Functionally, catalyzes the methyl esterification of L-isoaspartyl residues in peptides and proteins that result from spontaneous decomposition of normal L-aspartyl and L-asparaginyl residues. It plays a role in the repair and/or degradation of damaged proteins. This chain is Protein-L-isoaspartate O-methyltransferase, found in Shewanella baltica (strain OS195).